The following is a 442-amino-acid chain: Proline--tRNA ligase (442 aa).

Belongs to the class-II aminoacyl-tRNA synthetase family. ProS type 2 subfamily. As to quaternary structure, homodimer.

The protein localises to the cytoplasm. It carries out the reaction tRNA(Pro) + L-proline + ATP = L-prolyl-tRNA(Pro) + AMP + diphosphate. Its function is as follows. Catalyzes the attachment of proline to tRNA(Pro) in a two-step reaction: proline is first activated by ATP to form Pro-AMP and then transferred to the acceptor end of tRNA(Pro). In Brucella anthropi (strain ATCC 49188 / DSM 6882 / CCUG 24695 / JCM 21032 / LMG 3331 / NBRC 15819 / NCTC 12168 / Alc 37) (Ochrobactrum anthropi), this protein is Proline--tRNA ligase.